We begin with the raw amino-acid sequence, 1633 residues long: Laminin-like protein lam-2 (1633 aa).

The signal sequence occupies residues 1 to 19 (MTSILWLFSLAVLWHMGQP). A Laminin N-terminal domain is found at 47-286 (QPQRCVPDFV…AISDFAVGGR (240 aa)). Asn-116 and Asn-136 each carry an N-linked (GlcNAc...) asparagine glycan. Disulfide bonds link Cys-287-Cys-296, Cys-289-Cys-310, Cys-312-Cys-321, Cys-324-Cys-344, Cys-347-Cys-356, Cys-349-Cys-372, Cys-375-Cys-384, Cys-387-Cys-400, Cys-403-Cys-415, Cys-405-Cys-421, Cys-423-Cys-432, Cys-435-Cys-447, Cys-450-Cys-464, Cys-452-Cys-471, Cys-473-Cys-482, and Cys-485-Cys-500. Laminin EGF-like domains follow at residues 287–346 (CKCN…ECIA), 347–402 (CNCS…YCVA), 403–449 (CGCN…GCKN), and 450–502 (CGCE…GCTP). Asn-348 carries N-linked (GlcNAc...) asparagine glycosylation. The Laminin EGF-like 5; first part domain occupies 503-512 (CFCFGHSSIC). 3 N-linked (GlcNAc...) asparagine glycosylation sites follow: Asn-522, Asn-658, and Asn-740. Residues 529 to 701 (QDKQKWAGQN…NPKQATWIEH (173 aa)) enclose the Laminin IV type A domain. In terms of domain architecture, Laminin EGF-like 5; second part spans 702–747 (CECLPGFVGQFCESCESGFRRETKFGGPFNHCIKCDCHNHSNSCEA). 23 disulfide bridges follow: Cys-736/Cys-745, Cys-738/Cys-752, Cys-754/Cys-763, Cys-766/Cys-782, Cys-785/Cys-803, Cys-806/Cys-815, Cys-818/Cys-832, Cys-835/Cys-849, Cys-837/Cys-856, Cys-859/Cys-868, Cys-871/Cys-887, Cys-890/Cys-909, Cys-892/Cys-916, Cys-918/Cys-927, Cys-930/Cys-943, Cys-946/Cys-958, Cys-948/Cys-965, Cys-967/Cys-976, Cys-979/Cys-991, Cys-994/Cys-1006, Cys-996/Cys-1013, Cys-1015/Cys-1024, and Cys-1027/Cys-1038. Residues 752-784 (CICEHNTAGDTCERCARGYYGDALQGTEEDCQK) form the Laminin EGF-like 6; truncated domain. Laminin EGF-like domains follow at residues 785–834 (CPCP…ECVE), 835–889 (CACS…NCQS), 890–945 (CGCF…GCQE), 946–993 (CNCD…GCQP), and 994–1040 (CDCE…GCLP). N-linked (GlcNAc...) asparagine glycosylation is present at Asn-936. N-linked (GlcNAc...) asparagine glycosylation is found at Asn-1077, Asn-1183, Asn-1226, Asn-1259, Asn-1336, Asn-1452, and Asn-1528.

Its function is as follows. During the formation of neuromuscular junctions at the larval stage, negatively regulates membrane protrusion from body wall muscles, probably downstream of the integrin complex formed by pat-2 and pat-3. The polypeptide is Laminin-like protein lam-2 (lam-2) (Caenorhabditis elegans).